Reading from the N-terminus, the 451-residue chain is Prenyltransferase asqH1 (451 aa).

A disordered region spans residues 14-37 (AEDQSTRKVHWGQEGSGQSPEARP). Residue E120 participates in L-tryptophan binding. Positions 137, 274, 276, 278, and 373 each coordinate substrate.

The protein belongs to the tryptophan dimethylallyltransferase family.

The catalysed reaction is quinolinone B + dimethylallyl diphosphate = peniprequinolone + diphosphate. It functions in the pathway secondary metabolite biosynthesis. The protein operates within alkaloid biosynthesis. Its pathway is mycotoxin biosynthesis. Its function is as follows. Prenyltransferase; part of the gene cluster that mediates the biosynthesis of the aspoquinolone mycotoxins. Within the pathway, the prenyltransferase asqH1 catalyzes the canonical Friedel-Crafts alkylation of quinolinone B with dimethylallyl cation to yield dimethylallyl quinolone. The first step of the pathway is catalyzed by the nonribosomal peptide synthetase asqK that condenses anthranilic acid and O-methyl-L-tyrosine to produce 4'-methoxycyclopeptin. 4'-methoxycyclopeptin is then converted to 4'-methoxydehydrocyclopeptin by the ketoglutarate-dependent dioxygenase asqJ. AsqJ also converts its first product 4'-methoxydehydrocyclopeptin to 4'-methoxycyclopenin. The following conversion of 4'-methoxycyclopenin into 4'-methoxyviridicatin is catalyzed by the cyclopenase asqI. 4'-methoxyviridicatin is the precursor of quinolone natural products, and is further converted to quinolinone B. The prenyltransferase asqH1 then catalyzes the canonical Friedel-Crafts alkylation of quinolinone B with dimethylallyl cation to yield dimethylallyl quinolone, which is subjected to FAD-dependent dehydrogenation by the FAD-linked oxidoreductase asqF to yield conjugated aryl diene. The delta(3') double bond then serves as the site of the second alkylation with DMAPP catalyzed by the prenyltransferase asqH2 to yield a carbenium ion intermediate, which can be attacked by H(2)O to yield a styrenyl quinolone containing a C3'-hydroxyprenyl chain. The FAD-dependent monooxygenase asqG performs epoxidation of the terminal C7'-C8' olefin. Finally, after dehydratation of the epoxide at C3 by asqC, the quinolone epoxide rearrangement protein asqO catalyzes an enzymatic 3-exo-tet cyclization to yield the cyclopropyl-THF ring system in aspoquinolone. The polypeptide is Prenyltransferase asqH1 (Emericella nidulans (strain FGSC A4 / ATCC 38163 / CBS 112.46 / NRRL 194 / M139) (Aspergillus nidulans)).